The following is a 403-amino-acid chain: Microtubule-associated protein tau (403 aa).

The span at 1-32 shows a compositional bias: basic and acidic residues; that stretch reads MAEPRQEFDVMEDHAQGDYTLQDHEGDMEPGL. The tract at residues 1 to 219 is disordered; it reads MAEPRQEFDV…GPMPDLKNVK (219 aa). Alanine 2 bears the N-acetylalanine mark. Tyrosine 19 carries the phosphotyrosine modification. A Glycyl lysine isopeptide (Lys-Gly) (interchain with G-Cter in ubiquitin) cross-link involves residue lysine 33. A phosphoserine mark is found at serine 35 and serine 50. Positions 50-60 are enriched in polar residues; it reads SETSDAKSTPT. Phosphothreonine occurs at positions 58, 60, and 71. Over residues 90-106 the composition is skewed to basic and acidic residues; sequence KGKDGTGPDDKKAKGAD. Threonine 115 is modified (phosphothreonine). Arginine 117 carries the omega-N-methylarginine modification. Lysine 125 is modified (N6,N6-dimethyllysine; alternate). Lysine 125 is modified (N6-acetyllysine; alternate). Threonine 131, threonine 137, threonine 138, and threonine 143 each carry phosphothreonine. Residues 136 to 147 are compositionally biased toward low complexity; it reads KTTPTPKTSPGT. Phosphoserine is present on residues serine 153 and serine 157. A compositionally biased stretch (low complexity) spans 156–176; sequence RSGYSSPGSPGTPGSRSRTPS. Tyrosine 159 is modified (phosphotyrosine). Phosphoserine is present on residues serine 160, serine 161, and serine 164. Phosphothreonine is present on residues threonine 167 and threonine 174. Phosphoserine is present on serine 176. At threonine 179 the chain carries Phosphothreonine. Residue lysine 187 is modified to N6-acetyllysine. Position 193 is a phosphothreonine (threonine 193). A phosphoserine mark is found at serine 197 and serine 199. Tau/MAP repeat units lie at residues 206-236, 237-267, 268-298, and 299-330; these read QAAP…GGGK, VQII…GGGS, VQIV…GGGQ, and VEVK…GGGN. A Glycyl lysine isopeptide (Lys-Gly) (interchain with G-Cter in ubiquitin) cross-link involves residue lysine 216. Lysine 221 carries the N6-acetyllysine; alternate modification. At lysine 221 the chain carries N6-methyllysine; alternate. Lysine 221 is covalently cross-linked (Glycyl lysine isopeptide (Lys-Gly) (interchain with G-Cter in ubiquitin); alternate). Serine 224 carries the phosphoserine modification. Lysine 229 participates in a covalent cross-link: Glycyl lysine isopeptide (Lys-Gly) (interchain with G-Cter in ubiquitin). Lysine 243 is subject to N6-acetyllysine; alternate. Lysine 243 participates in a covalent cross-link: Glycyl lysine isopeptide (Lys-Gly) (interchain with G-Cter in ubiquitin); alternate. 2 positions are modified to phosphoserine: serine 247 and serine 251. At lysine 252 the chain carries N6-acetyllysine. A disulfide bridge connects residues cysteine 253 and cysteine 284. Serine 255 bears the Phosphoserine mark. N6-acetyllysine; alternate is present on lysine 260. Lysine 260 participates in a covalent cross-link: Glycyl lysine isopeptide (Lys-Gly) (interchain with G-Cter in ubiquitin); alternate. At serine 267 the chain carries Phosphoserine. Lysine 273 is subject to N6,N6-dimethyllysine; alternate. An N6-acetyllysine; alternate mark is found at lysine 273, lysine 279, and lysine 283. Residues lysine 273, lysine 279, and lysine 283 each participate in a glycyl lysine isopeptide (Lys-Gly) (interchain with G-Cter in ubiquitin); alternate cross-link. The residue at position 286 (serine 286) is a Phosphoserine. N6-acetyllysine; alternate is present on residues lysine 293, lysine 305, and lysine 309. Residues lysine 293, lysine 305, and lysine 309 each participate in a glycyl lysine isopeptide (Lys-Gly) (interchain with G-Cter in ubiquitin); alternate cross-link. The residue at position 311 (arginine 311) is an Omega-N-methylarginine. Serine 314 carries the post-translational modification Phosphoserine. Lysine 315 is covalently cross-linked (Glycyl lysine isopeptide (Lys-Gly) (interchain with G-Cter in ubiquitin)). A Phosphoserine modification is found at serine 318. Lysine 331 is subject to N6-acetyllysine; alternate. Residue lysine 331 forms a Glycyl lysine isopeptide (Lys-Gly) (interchain with G-Cter in ubiquitin); alternate linkage. Lysine 337 is covalently cross-linked (Glycyl lysine isopeptide (Lys-Gly) (interchain with G-Cter in ubiquitin)). N6-acetyllysine; alternate is present on lysine 347. Residue lysine 347 forms a Glycyl lysine isopeptide (Lys-Gly) (interchain with G-Cter in ubiquitin); alternate linkage. The residue at position 356 (tyrosine 356) is a Phosphotyrosine. Phosphoserine is present on residues serine 358 and serine 362. The segment at 360–379 is disordered; that stretch reads VVSGDTSPRHLSNVSSTGSI. Polar residues predominate over residues 363–378; the sequence is GDTSPRHLSNVSSTGS. Threonine 365 carries the phosphothreonine modification. Residues serine 366, serine 371, serine 378, and serine 384 each carry the phosphoserine modification. At threonine 389 the chain carries Phosphothreonine.

In terms of assembly, interacts with MARK1, MARK2, MARK3 and MARK4. Interacts with SQSTM1 when polyubiquitinated. Interacts with PSMC2 through SQSTM1. Interacts with FKBP4. Binds to CSNK1D. Interacts with SGK1. Interacts with PIN1. Interacts with LRRK2. Interacts with LRP1, leading to endocytosis; this interaction is reduced in the presence of LRPAP1/RAP. Polyubiquitinated. Requires functional TRAF6 and may provoke SQSTM1-dependent degradation by the proteasome. Post-translationally, phosphorylation at various serine and threonine residues in S-P or T-P motifs by proline-directed protein kinases (PDPK1, CDK1, CDK5, GSK3, MAPK) (a few sites per protein in interphase, more in mitosis), and at serine residues in K-X-G-S motifs by MAP/microtubule affinity-regulating kinase (MARK1, MARK2, MARK3, MARK4), causing detachment from microtubules, and their disassembly. Phosphorylation at Ser-224 by BRSK1 and BRSK2 in neurons affects ability to bind microtubules and plays a role in neuron polarization. Phosphorylated by PHK. Dephosphorylation at several serine and threonine residues by the serine/threonine phosphatase PPP5C. Expressed in neurons.

Its subcellular location is the cytoplasm. It is found in the cytosol. It localises to the cell membrane. The protein localises to the cytoskeleton. The protein resides in the cell projection. Its subcellular location is the axon. It is found in the dendrite. Promotes microtubule assembly and stability, and might be involved in the establishment and maintenance of neuronal polarity. The C-terminus binds axonal microtubules while the N-terminus binds neural plasma membrane components, suggesting that tau functions as a linker protein between both. Axonal polarity is predetermined by tau localization (in the neuronal cell) in the domain of the cell body defined by the centrosome. The short isoforms allow plasticity of the cytoskeleton whereas the longer isoforms may preferentially play a role in its stabilization. The chain is Microtubule-associated protein tau (MAPT) from Capra hircus (Goat).